The chain runs to 101 residues: Small ribosomal subunit protein uS14 (101 aa).

The segment at 32–62 (GDAKRSDAEREAARLGLQKLPRNANPTRQRN) is disordered. Over residues 33–44 (DAKRSDAEREAA) the composition is skewed to basic and acidic residues.

Belongs to the universal ribosomal protein uS14 family. Part of the 30S ribosomal subunit. Contacts proteins S3 and S10.

Functionally, binds 16S rRNA, required for the assembly of 30S particles and may also be responsible for determining the conformation of the 16S rRNA at the A site. In Verminephrobacter eiseniae (strain EF01-2), this protein is Small ribosomal subunit protein uS14.